A 662-amino-acid polypeptide reads, in one-letter code: A-kinase anchor protein 10, mitochondrial (662 aa).

Residues 1 to 28 (MRGAGPSPRQSPRTLRPDPGPAMSFFRR) constitute a mitochondrion transit peptide. The segment at 1–55 (MRGAGPSPRQSPRTLRPDPGPAMSFFRRKVKGKEQEKTSDVKSIKASISVHSPQK) is disordered. Residues 32–43 (GKEQEKTSDVKS) are compositionally biased toward basic and acidic residues. Phosphoserine is present on residues Ser52 and Ser189. RGS domains lie at 125 to 369 (TLEQ…CKYQ) and 379 to 505 (YLAD…YKYL). The segment covering 261–280 (SMETQESSSTLTVASRNSPA) has biased composition (polar residues). A disordered region spans residues 261-282 (SMETQESSSTLTVASRNSPASP). At Ser281 the chain carries Phosphoserine. Positions 524–548 (LTAPGSVGPPDESHPGSSDSSASQS) are disordered. The segment at 634 to 647 (LAWKIAKMIVSDIM) is PKA-RII subunit binding.

It localises to the mitochondrion. The protein localises to the membrane. The protein resides in the cytoplasm. In terms of biological role, differentially targeted protein that binds to type I and II regulatory subunits of protein kinase A and anchors them to the mitochondria or the plasma membrane. Although the physiological relevance between PKA and AKAPS with mitochondria is not fully understood, one idea is that BAD, a proapoptotic member, is phosphorylated and inactivated by mitochondria-anchored PKA. It cannot be excluded too that it may facilitate PKA as well as G protein signal transduction, by acting as an adapter for assembling multiprotein complexes. With its RGS domain, it could lead to the interaction to G-alpha proteins, providing a link between the signaling machinery and the downstream kinase. In Homo sapiens (Human), this protein is A-kinase anchor protein 10, mitochondrial (AKAP10).